Here is a 264-residue protein sequence, read N- to C-terminus: Proliferating cell nuclear antigen (264 aa).

The DNA-binding element occupies 61–80; that stretch reads RCDRNISMGMNLANMAKMLK.

This sequence belongs to the PCNA family.

The protein resides in the nucleus. In terms of biological role, this protein is an auxiliary protein of DNA polymerase delta and is involved in the control of eukaryotic DNA replication by increasing the polymerase's processibility during elongation of the leading strand. The protein is Proliferating cell nuclear antigen (PCNA) of Nicotiana tabacum (Common tobacco).